Here is a 353-residue protein sequence, read N- to C-terminus: Paraxanthine methyltransferase 2 (353 aa).

Tyr18 is an S-adenosyl-L-methionine binding site. Substrate is bound by residues Tyr18 and 21–25 (QSSYQ). Residues Gly59, 59 to 60 (GC), Asn65, 99 to 102 (FNDL), 128 to 130 (SFF), and 145 to 147 (SYA) contribute to the S-adenosyl-L-methionine site. 146 to 150 (YAFLF) contacts substrate. Mg(2+)-binding residues include Asn167, Asp252, and Phe254. Positions 301 and 306 each coordinate substrate.

This sequence belongs to the methyltransferase superfamily. SABATH family. Homodimer. The cofactor is Mg(2+).

This is Paraxanthine methyltransferase 2 from Arabidopsis thaliana (Mouse-ear cress).